A 429-amino-acid chain; its full sequence is U3 small nucleolar RNA-associated protein 18 homolog (429 aa).

WD repeat units lie at residues 117 to 156, 295 to 336, 345 to 386, and 392 to 428; these read RYTR…KKDR, TDDG…NSTN, NLVT…TFKN, and GKVT…HFTD.

It belongs to the WD repeat UTP18 family.

It localises to the nucleus. It is found in the nucleolus. In terms of biological role, involved in nucleolar processing of pre-18S ribosomal RNA. This Caenorhabditis elegans protein is U3 small nucleolar RNA-associated protein 18 homolog.